The following is a 114-amino-acid chain: T cell receptor beta variable 5-8 (114 aa).

A signal peptide spans 1-21; it reads MGPRLLFWALLCLLGTGPVEA. In terms of domain architecture, Ig-like spans 22 to 114; the sequence is GVTQSPTHLI…SALYLCASSL (93 aa). Cys42 and Cys110 are joined by a disulfide. Residue Asn90 is glycosylated (N-linked (GlcNAc...) asparagine).

As to quaternary structure, alpha-beta TR is a heterodimer composed of an alpha and beta chain; disulfide-linked. The alpha-beta TR is associated with the transmembrane signaling CD3 coreceptor proteins to form the TR-CD3 (TcR or TCR). The assembly of alpha-beta TR heterodimers with CD3 occurs in the endoplasmic reticulum where a single alpha-beta TR heterodimer associates with one CD3D-CD3E heterodimer, one CD3G-CD3E heterodimer and one CD247 homodimer forming a stable octameric structure. CD3D-CD3E and CD3G-CD3E heterodimers preferentially associate with TR alpha and TR beta chains, respectively. The association of the CD247 homodimer is the last step of TcR assembly in the endoplasmic reticulum and is required for transport to the cell surface.

It localises to the cell membrane. Its function is as follows. V region of the variable domain of T cell receptor (TR) beta chain that participates in the antigen recognition. Alpha-beta T cell receptors are antigen specific receptors which are essential to the immune response and are present on the cell surface of T lymphocytes. Recognize peptide-major histocompatibility (MH) (pMH) complexes that are displayed by antigen presenting cells (APC), a prerequisite for efficient T cell adaptive immunity against pathogens. Binding of alpha-beta TR to pMH complex initiates TR-CD3 clustering on the cell surface and intracellular activation of LCK that phosphorylates the ITAM motifs of CD3G, CD3D, CD3E and CD247 enabling the recruitment of ZAP70. In turn ZAP70 phosphorylates LAT, which recruits numerous signaling molecules to form the LAT signalosome. The LAT signalosome propagates signal branching to three major signaling pathways, the calcium, the mitogen-activated protein kinase (MAPK) kinase and the nuclear factor NF-kappa-B (NF-kB) pathways, leading to the mobilization of transcription factors that are critical for gene expression and essential for T cell growth and differentiation. The T cell repertoire is generated in the thymus, by V-(D)-J rearrangement. This repertoire is then shaped by intrathymic selection events to generate a peripheral T cell pool of self-MH restricted, non-autoaggressive T cells. Post-thymic interaction of alpha-beta TR with the pMH complexes shapes TR structural and functional avidity. The polypeptide is T cell receptor beta variable 5-8 (Homo sapiens (Human)).